The primary structure comprises 544 residues: Chaperonin GroEL (544 aa).

ATP contacts are provided by residues 29-32 (TMGP), lysine 50, 86-90 (DGTTT), glycine 414, 477-479 (NAV), and aspartate 493.

It belongs to the chaperonin (HSP60) family. As to quaternary structure, forms a cylinder of 14 subunits composed of two heptameric rings stacked back-to-back. Interacts with the co-chaperonin GroES.

Its subcellular location is the cytoplasm. It catalyses the reaction ATP + H2O + a folded polypeptide = ADP + phosphate + an unfolded polypeptide.. Together with its co-chaperonin GroES, plays an essential role in assisting protein folding. The GroEL-GroES system forms a nano-cage that allows encapsulation of the non-native substrate proteins and provides a physical environment optimized to promote and accelerate protein folding. This Campylobacter curvus (strain 525.92) protein is Chaperonin GroEL.